Consider the following 1423-residue polypeptide: Fructan beta-fructosidase (1423 aa).

An N-terminal signal peptide occupies residues 1–39; the sequence is MEEETVCKNWFMRKSGKSWIFGCAVFFVLGLATALPVAA. The tract at residues 44 to 161 is disordered; that stretch reads QTTAADTAVT…TNLEDMSHDT (118 aa). Residues 69 to 126 show a composition bias toward polar residues; the sequence is AVTETTQSEGTASKQLTTPAVADQTTEPTDNEPISSSDGASSPYQVTDTTEPQQTLTP. Substrate is bound by residues 455-458, Gln-474, 513-514, 581-582, and Asp-783; these read WAND, FS, and RD. Residue Asp-458 is part of the active site. The involved in binding of sugars with beta-(2,6) linkages or binding of molecular weight fructans stretch occupies residues 867-871; the sequence is ASVEV. A BIG2 domain is found at 924-1002; that stretch reads PVAMNTTTAK…SKENPSLSKT (79 aa). Over residues 1368-1385 the composition is skewed to polar residues; sequence DVNSVQQTEPSVMSSSPK. Residues 1368 to 1394 form a disordered region; sequence DVNSVQQTEPSVMSSSPKATLPDTGDH. The LPXTG sorting signal motif lies at 1388 to 1392; that stretch reads LPDTG. Residue Thr-1391 is modified to Pentaglycyl murein peptidoglycan amidated threonine. Residues 1392–1423 constitute a propeptide, removed by sortase; it reads GDHKTDLSQLGVLAMIGSFLVEIAGYFKKRKD.

The protein belongs to the glycosyl hydrolase 32 family.

Its subcellular location is the secreted. The protein localises to the cell wall. It catalyses the reaction Hydrolysis of terminal, non-reducing (2-&gt;1)- and (2-&gt;6)-linked beta-D-fructofuranose residues in fructans.. In terms of biological role, this protein is a fructanase enzyme which degrades levans and inulins to fructose and also cleaves sucrose into glucose and fructose and can therefore function as an extracellular invertase. This chain is Fructan beta-fructosidase (fruA), found in Streptococcus mutans serotype c (strain ATCC 700610 / UA159).